A 789-amino-acid chain; its full sequence is 1-phosphatidylinositol 4,5-bisphosphate phosphodiesterase delta-3 (789 aa).

The region spanning 63-172 is the PH domain; the sequence is RAMLRGSRLR…WVRGLTKLRA (110 aa). The substrate binding stretch occupies residues 73–101; that stretch reads KIRSRTWHKERLYRLQEDGLSVWFQRRIP. Phosphoserine is present on S105. 3 consecutive EF-hand domains span residues 182–217, 218–253, and 250–285; these read RLDH…VNVD, MNDM…LLKR, and LLKR…QGEE. D195, N197, D199, K201, E206, D231, S233, N235, R237, and E242 together coordinate Ca(2+). Residues 337-482 enclose the PI-PLC X-box domain; the sequence is QDMNQPLAHY…LKGRVLVKGK (146 aa). Residue H352 is part of the active site. N353, E382, and D384 together coordinate Ca(2+). H397 is an active-site residue. E431 contacts Ca(2+). The segment at 461–519 is disordered; that stretch reads SPNPEELPSPEQLKGRVLVKGKKLPAARSEDGRALSDREEEEEDDEEEEEEVEAAAQRR. Residues K480 and K482 each contribute to the substrate site. Over residues 488-497 the composition is skewed to basic and acidic residues; the sequence is RSEDGRALSD. At S496 the chain carries Phosphoserine. Positions 498–513 are enriched in acidic residues; sequence REEEEEDDEEEEEEVE. In terms of domain architecture, PI-PLC Y-box spans 528–644; sequence LSALAVYCHA…GYVLKPACLR (117 aa). Residue S557 participates in substrate binding. S573 is subject to Phosphoserine. R584 contributes to the substrate binding site. Residues 644-769 form the C2 domain; it reads RQPDSTFDPE…QGYRHIHLLS (126 aa). Residues I683, D685, N709, D738, Y739, and D740 each contribute to the Ca(2+) site.

Requires Ca(2+) as cofactor. In terms of tissue distribution, present in corneal epithelial cells (at protein level).

The protein localises to the membrane. It is found in the cytoplasm. It localises to the cleavage furrow. It carries out the reaction a 1,2-diacyl-sn-glycero-3-phospho-(1D-myo-inositol-4,5-bisphosphate) + H2O = 1D-myo-inositol 1,4,5-trisphosphate + a 1,2-diacyl-sn-glycerol + H(+). With respect to regulation, strongly activated by phosphatidic acid. Inhibited by phosphatidylethanolamine (PtdEtn), phosphatidylcholine (PtdCho), sphingomyelin and phosphatidylserine (PtdSer). In terms of biological role, hydrolyzes the phosphatidylinositol 4,5-bisphosphate (PIP2) to generate 2 second messenger molecules diacylglycerol (DAG) and inositol 1,4,5-trisphosphate (IP3). DAG mediates the activation of protein kinase C (PKC), while IP3 releases Ca(2+) from intracellular stores. Essential for trophoblast and placental development. May participate in cytokinesis by hydrolyzing PIP2 at the cleavage furrow. Regulates neurite outgrowth through the inhibition of RhoA/Rho kinase signaling. In Homo sapiens (Human), this protein is 1-phosphatidylinositol 4,5-bisphosphate phosphodiesterase delta-3.